A 488-amino-acid chain; its full sequence is Histamine H1 receptor (488 aa).

Residues 1 to 38 (MSFLPGMTPVTLSNFSWALEDRMLEGNSTTTPTRQLMP) lie on the Extracellular side of the membrane. N-linked (GlcNAc...) asparagine glycosylation is found at N14 and N27. A helical membrane pass occupies residues 39 to 59 (LVVVLSSVSLVTVALNLLVLY). The Cytoplasmic portion of the chain corresponds to 60 to 73 (AVRSERKLHTVGNL). The chain crosses the membrane as a helical span at residues 74–98 (YIVSLSVADLIVGAVVMPMSILYLH). The Extracellular portion of the chain corresponds to 99-106 (RSAWILGR). A helical membrane pass occupies residues 107–132 (PLCLFWLSMDYVASTASIFSVFILCI). An intrachain disulfide couples C109 to C189. 2 residues coordinate histamine: D116 and T121. Residues 116–121 (DYVAST) form an important for agonist binding region. Topologically, residues 133–153 (DRYRSVQQPLRYLRYRTKTRA) are cytoplasmic. Phosphothreonine occurs at positions 149 and 151. A helical membrane pass occupies residues 154-173 (SATILGAWLLSFLWVIPILG). The Extracellular segment spans residues 174–197 (WHHFMAPTSEPREKKCETDFYDVT). A helical membrane pass occupies residues 198-220 (WFKVMTAIINFYLPTLLMLWFYI). N207 provides a ligand contact to histamine. Residues 221-417 (RIYKAVRRHC…LNRERKAAKQ (197 aa)) lie on the Cytoplasmic side of the membrane. S239 is modified (phosphoserine). Positions 259 to 274 (RMGKESPWEDPKRCSK) are enriched in basic and acidic residues. Positions 259–285 (RMGKESPWEDPKRCSKDASGVHTPMPS) are disordered. S345, S381, S383, S397, and S399 each carry phosphoserine. The helical transmembrane segment at 418–441 (LGCIMAAFILCWIPYFVFFMVIAF) threads the bilayer. The important for agonist binding stretch occupies residues 425–429 (FILCW). Histamine is bound at residue Y432. The cysteines at positions 442 and 445 are disulfide-linked. At 442–447 (CKSCSN) the chain is on the extracellular side. Residues 448 to 470 (EPVHMFTIWLGYLNSTLNPLIYP) form a helical membrane-spanning segment. Residues 471-488 (LCNENFRKTFKRILRIPP) lie on the Cytoplasmic side of the membrane.

Belongs to the G-protein coupled receptor 1 family. In terms of processing, phosphorylation at sites in the second and third cytoplasmic loops independently contribute to agonist-induced receptor down-regulation.

It localises to the cell membrane. Functionally, G-protein-coupled receptor for histamine, a biogenic amine that functions as an immune modulator and a neurotransmitter. Through the H1 receptor, histamine mediates the contraction of smooth muscles and increases capillary permeability due to contraction of terminal venules. Also mediates neurotransmission in the central nervous system and thereby regulates circadian rhythms, emotional and locomotor activities as well as cognitive functions. The sequence is that of Histamine H1 receptor from Cavia porcellus (Guinea pig).